The sequence spans 56 residues: Large ribosomal subunit protein bL33 (56 aa).

This sequence belongs to the bacterial ribosomal protein bL33 family.

The sequence is that of Large ribosomal subunit protein bL33 from Ehrlichia canis (strain Jake).